Reading from the N-terminus, the 174-residue chain is uncharacterized protein (174 aa).

Residues 7-24 traverse the membrane as a helical segment; the sequence is LLLLAFAVCLAVGFSGCL.

The protein localises to the membrane. This is an uncharacterized protein from Methanocaldococcus jannaschii (strain ATCC 43067 / DSM 2661 / JAL-1 / JCM 10045 / NBRC 100440) (Methanococcus jannaschii).